A 108-amino-acid chain; its full sequence is ATP synthase epsilon chain (108 aa).

This sequence belongs to the ATPase epsilon chain family. As to quaternary structure, F-type ATPases have 2 components, CF(1) - the catalytic core - and CF(0) - the membrane proton channel. CF(1) has five subunits: alpha(3), beta(3), gamma(1), delta(1), epsilon(1). CF(0) has three main subunits: a, b and c.

Its subcellular location is the cell inner membrane. Its function is as follows. Produces ATP from ADP in the presence of a proton gradient across the membrane. The sequence is that of ATP synthase epsilon chain from Rickettsia bellii (strain OSU 85-389).